The following is an 84-amino-acid chain: Sulfur carrier protein TusA (84 aa).

Residue C21 is the Cysteine persulfide intermediate of the active site.

Belongs to the sulfur carrier protein TusA family.

Its subcellular location is the cytoplasm. In terms of biological role, sulfur carrier protein which probably makes part of a sulfur-relay system. This Pseudomonas syringae pv. tomato (strain ATCC BAA-871 / DC3000) protein is Sulfur carrier protein TusA.